The sequence spans 537 residues: Putative cysteine ligase BshC (537 aa).

A coiled-coil region spans residues 417–457; that stretch reads ASEQFLNELDQLEAQQKETYERLAAEVQGNEDNKNLVEKNN.

This sequence belongs to the BshC family.

Involved in bacillithiol (BSH) biosynthesis. May catalyze the last step of the pathway, the addition of cysteine to glucosamine malate (GlcN-Mal) to generate BSH. The polypeptide is Putative cysteine ligase BshC (Staphylococcus carnosus (strain TM300)).